A 273-amino-acid chain; its full sequence is Neuferricin (273 aa).

An N-terminal signal peptide occupies residues 1–22 (MLGYLAAAALCLAAVLLMRLDH). Residues 44-143 (GRLMSKEELS…QNYITIGKLT (100 aa)) enclose the Cytochrome b5 heme-binding domain.

This sequence belongs to the cytochrome b5 family. MAPR subfamily.

It localises to the secreted. In terms of biological role, heme-binding protein which promotes neuronal but not astrocyte differentiation. This is Neuferricin (cyb5d2) from Xenopus tropicalis (Western clawed frog).